The sequence spans 942 residues: Isoleucine--tRNA ligase (942 aa).

The short motif at 58–68 (PYANGDIHLGH) is the 'HIGH' region element. Glu567 contributes to the L-isoleucyl-5'-AMP binding site. A 'KMSKS' region motif is present at residues 608 to 612 (KMSKS). Lys611 is a binding site for ATP. Cys905, Cys908, Cys925, and Cys928 together coordinate Zn(2+).

The protein belongs to the class-I aminoacyl-tRNA synthetase family. IleS type 1 subfamily. In terms of assembly, monomer. It depends on Zn(2+) as a cofactor.

The protein localises to the cytoplasm. The catalysed reaction is tRNA(Ile) + L-isoleucine + ATP = L-isoleucyl-tRNA(Ile) + AMP + diphosphate. Catalyzes the attachment of isoleucine to tRNA(Ile). As IleRS can inadvertently accommodate and process structurally similar amino acids such as valine, to avoid such errors it has two additional distinct tRNA(Ile)-dependent editing activities. One activity is designated as 'pretransfer' editing and involves the hydrolysis of activated Val-AMP. The other activity is designated 'posttransfer' editing and involves deacylation of mischarged Val-tRNA(Ile). The sequence is that of Isoleucine--tRNA ligase from Pseudoalteromonas translucida (strain TAC 125).